We begin with the raw amino-acid sequence, 185 residues long: Peptidyl-tRNA hydrolase (185 aa).

Position 14 (tyrosine 14) interacts with tRNA. The active-site Proton acceptor is the histidine 19. Tyrosine 65, asparagine 67, and asparagine 113 together coordinate tRNA.

The protein belongs to the PTH family. In terms of assembly, monomer.

Its subcellular location is the cytoplasm. It catalyses the reaction an N-acyl-L-alpha-aminoacyl-tRNA + H2O = an N-acyl-L-amino acid + a tRNA + H(+). Hydrolyzes ribosome-free peptidyl-tRNAs (with 1 or more amino acids incorporated), which drop off the ribosome during protein synthesis, or as a result of ribosome stalling. Its function is as follows. Catalyzes the release of premature peptidyl moieties from peptidyl-tRNA molecules trapped in stalled 50S ribosomal subunits, and thus maintains levels of free tRNAs and 50S ribosomes. The polypeptide is Peptidyl-tRNA hydrolase (Rickettsia rickettsii (strain Iowa)).